The chain runs to 274 residues: Nitrogenase iron protein (274 aa).

Glycine 8–serine 15 lines the ATP pocket. Cysteine 94 serves as a coordination point for [4Fe-4S] cluster. At arginine 97 the chain carries ADP-ribosylarginine; by dinitrogenase reductase ADP-ribosyltransferase. [4Fe-4S] cluster is bound at residue cysteine 131.

It belongs to the NifH/BchL/ChlL family. In terms of assembly, homodimer. [4Fe-4S] cluster is required as a cofactor. The reversible ADP-ribosylation of Arg-97 inactivates the nitrogenase reductase and regulates nitrogenase activity.

The catalysed reaction is N2 + 8 reduced [2Fe-2S]-[ferredoxin] + 16 ATP + 16 H2O = H2 + 8 oxidized [2Fe-2S]-[ferredoxin] + 2 NH4(+) + 16 ADP + 16 phosphate + 6 H(+). Its function is as follows. The key enzymatic reactions in nitrogen fixation are catalyzed by the nitrogenase complex, which has 2 components: the iron protein and the molybdenum-iron protein. The chain is Nitrogenase iron protein from Chlorobium phaeobacteroides (strain DSM 266 / SMG 266 / 2430).